The sequence spans 142 residues: Universal stress protein C (142 aa).

This sequence belongs to the universal stress protein A family.

The protein resides in the cytoplasm. Functionally, required for resistance to DNA-damaging agents. In Escherichia coli (strain K12), this protein is Universal stress protein C (uspC).